A 138-amino-acid chain; its full sequence is Putative nickel-responsive regulator (138 aa).

Ni(2+) is bound by residues H80, H91, H93, and C99.

This sequence belongs to the transcriptional regulatory CopG/NikR family. It depends on Ni(2+) as a cofactor.

Functionally, transcriptional regulator. In Campylobacter hominis (strain ATCC BAA-381 / DSM 21671 / CCUG 45161 / LMG 19568 / NCTC 13146 / CH001A), this protein is Putative nickel-responsive regulator.